Consider the following 594-residue polypeptide: Aspartate--tRNA(Asp/Asn) ligase (594 aa).

Residue Glu173 coordinates L-aspartate. Residues 197 to 200 (QLFK) are aspartate. Residue Arg219 coordinates L-aspartate. ATP-binding positions include 219 to 221 (RDE) and Gln228. Position 449 (His449) interacts with L-aspartate. An ATP-binding site is contributed by Glu482. Arg489 lines the L-aspartate pocket. 534–537 (GLDR) contacts ATP.

Belongs to the class-II aminoacyl-tRNA synthetase family. Type 1 subfamily. As to quaternary structure, homodimer.

The protein localises to the cytoplasm. It catalyses the reaction tRNA(Asx) + L-aspartate + ATP = L-aspartyl-tRNA(Asx) + AMP + diphosphate. Its function is as follows. Aspartyl-tRNA synthetase with relaxed tRNA specificity since it is able to aspartylate not only its cognate tRNA(Asp) but also tRNA(Asn). Reaction proceeds in two steps: L-aspartate is first activated by ATP to form Asp-AMP and then transferred to the acceptor end of tRNA(Asp/Asn). The chain is Aspartate--tRNA(Asp/Asn) ligase from Saccharophagus degradans (strain 2-40 / ATCC 43961 / DSM 17024).